The sequence spans 192 residues: uncharacterized protein (192 aa).

This is an uncharacterized protein from Aquifex aeolicus (strain VF5).